Here is a 371-residue protein sequence, read N- to C-terminus: tRNA-specific 2-thiouridylase MnmA (371 aa).

ATP-binding positions include 8–15 (GMSGGVDS) and Met-34. Positions 94–96 (NPD) are interaction with target base in tRNA. The active-site Nucleophile is Cys-99. Cysteines 99 and 195 form a disulfide. Gly-123 is an ATP binding site. The interaction with tRNA stretch occupies residues 145–147 (KDQ). Residue Cys-195 is the Cysteine persulfide intermediate of the active site. Positions 309 to 310 (RY) are interaction with tRNA.

The protein belongs to the MnmA/TRMU family.

Its subcellular location is the cytoplasm. It carries out the reaction S-sulfanyl-L-cysteinyl-[protein] + uridine(34) in tRNA + AH2 + ATP = 2-thiouridine(34) in tRNA + L-cysteinyl-[protein] + A + AMP + diphosphate + H(+). Catalyzes the 2-thiolation of uridine at the wobble position (U34) of tRNA, leading to the formation of s(2)U34. The sequence is that of tRNA-specific 2-thiouridylase MnmA from Methylococcus capsulatus (strain ATCC 33009 / NCIMB 11132 / Bath).